Consider the following 152-residue polypeptide: Large ribosomal subunit protein bL9 (152 aa).

This sequence belongs to the bacterial ribosomal protein bL9 family.

Functionally, binds to the 23S rRNA. This is Large ribosomal subunit protein bL9 from Prochlorococcus marinus (strain SARG / CCMP1375 / SS120).